Here is a 248-residue protein sequence, read N- to C-terminus: Adenylate kinase isoenzyme 6 homolog HBR1 (248 aa).

ATP-binding residues include G19, G21, K22, S23, and S24. The segment at 49-72 is NMPbind; it reads NISEIAKERDCIESYDAKLDTSIV. Residues 124-134 form an LID region; it reads TRNYNDLKLQE. R125 is an ATP binding site. The interval 188–248 is disordered; it reads DGVSNELNKQ…EMEHTEDIAQ (61 aa). A compositionally biased stretch (acidic residues) spans 202 to 238; that stretch reads DSSDEGDDNSDSDEYELEEDEQEEEEEREEYDEETNE. Basic and acidic residues predominate over residues 239 to 248; sequence EMEHTEDIAQ.

It belongs to the adenylate kinase family. AK6 subfamily. As to quaternary structure, interacts with small ribosomal subunit protein uS11. Not a structural component of 43S pre-ribosomes, but transiently interacts with them by binding to uS11.

The protein localises to the cytoplasm. It is found in the nucleus. It catalyses the reaction AMP + ATP = 2 ADP. The catalysed reaction is ATP + H2O = ADP + phosphate + H(+). Broad-specificity nucleoside monophosphate (NMP) kinase that catalyzes the reversible transfer of the terminal phosphate group between nucleoside triphosphates and monophosphates. Also has ATPase activity. Involved in the late cytoplasmic maturation steps of the 40S ribosomal particles, specifically 18S rRNA maturation. While NMP activity is not required for ribosome maturation, ATPase activity is. Associates transiently with small ribosomal subunit protein uS11. ATP hydrolysis breaks the interaction with uS11. May temporarily remove uS11 from the ribosome to enable a conformational change of the ribosomal RNA that is needed for the final maturation step of the small ribosomal subunit. Its NMP activity may have a role in nuclear energy homeostasis. Induces transcription of mating-type proteins ALPHA1 and ALPHA2 and moderately represses transcription of mating-type protein A1 in response to hemoglobin and growth signals. Involved in the induction of a high affinity fibronectin receptor by sub-inhibitory dosages of caspofungin. The polypeptide is Adenylate kinase isoenzyme 6 homolog HBR1 (HBR1) (Candida albicans (strain SC5314 / ATCC MYA-2876) (Yeast)).